A 218-amino-acid polypeptide reads, in one-letter code: Glutathione S-transferase U22 (218 aa).

Ala-2 is modified (N-acetylalanine). A GST N-terminal domain is found at 3-82 (DEVILLDFWP…YIDEVWSDKN (80 aa)). Residues 13–14 (SP), 39–40 (DK), 53–54 (KI), and 66–67 (ES) contribute to the glutathione site. The GST C-terminal domain occupies 88 to 208 (DPYQRAQARF…LHDSEKILAF (121 aa)). Residue Thr-149 is modified to Phosphothreonine.

It belongs to the GST superfamily. Tau family.

It is found in the cytoplasm. It localises to the cytosol. It carries out the reaction RX + glutathione = an S-substituted glutathione + a halide anion + H(+). In terms of biological role, may be involved in the conjugation of reduced glutathione to a wide number of exogenous and endogenous hydrophobic electrophiles and have a detoxification role against certain herbicides. The protein is Glutathione S-transferase U22 (GSTU22) of Arabidopsis thaliana (Mouse-ear cress).